A 350-amino-acid chain; its full sequence is ALA-interacting subunit 5 (350 aa).

Residues 1–23 (MSSTAASSTVGGGGSSEISGVKK) form a disordered region. Ser2 is modified (N-acetylserine). The chain crosses the membrane as a helical span at residues 50 to 70 (VILTFLVAGVVFIPLGVICLF). 2 N-linked (GlcNAc...) asparagine glycosylation sites follow: Asn181 and Asn231. The chain crosses the membrane as a helical span at residues 304–324 (FLGIAYLTVGSICLFLAVTFA).

It belongs to the CDC50/LEM3 family. As to quaternary structure, interacts with ALA2 and ALA3 in a heterologous system. As to expression, expressed in roots, leaves, stems, flowers and siliques.

It is found in the golgi apparatus membrane. Its subcellular location is the prevacuolar compartment membrane. The protein resides in the endoplasmic reticulum membrane. Functionally, required for the lipid transport activity of the ALA/ALIS P4-ATPase complex. The sequence is that of ALA-interacting subunit 5 (ALIS5) from Arabidopsis thaliana (Mouse-ear cress).